Consider the following 456-residue polypeptide: Divalent metal cation transporter MntH (456 aa).

The next 11 membrane-spanning stretches (helical) occupy residues 47-67 (ALSF…PGNW), 77-97 (FGYA…LLQA), 123-143 (AWPL…AEVI), 151-171 (LLFG…VLLV), 184-204 (ALII…IIMA), 227-247 (MLYI…LYLH), 276-296 (IALT…AASF), 316-336 (PLLG…CCGL), 369-389 (FVAI…GTTE), 392-412 (ILSQ…LVIF), and 422-442 (LAAA…IVVL).

It belongs to the NRAMP family.

It is found in the cell inner membrane. H(+)-stimulated, divalent metal cation uptake system. This Brucella suis biovar 1 (strain 1330) protein is Divalent metal cation transporter MntH.